A 166-amino-acid chain; its full sequence is Glutamyl-tRNA(Gln) amidotransferase subunit C, mitochondrial (166 aa).

The transit peptide at 1-44 directs the protein to the mitochondrion; it reads MIRGWTIFTLCKPSALVGSSHFNKQFNWAKSQLQFATKVPQQPY.

The protein belongs to the GatC family. Subunit of the heterotrimeric GatCAB amidotransferase (AdT) complex, composed of A, B and C subunits.

It localises to the mitochondrion. It carries out the reaction L-glutamyl-tRNA(Gln) + L-glutamine + ATP + H2O = L-glutaminyl-tRNA(Gln) + L-glutamate + ADP + phosphate + H(+). Functionally, allows the formation of correctly charged Gln-tRNA(Gln) through the transamidation of misacylated Glu-tRNA(Gln) in the mitochondria. The reaction takes place in the presence of glutamine and ATP through an activated gamma-phospho-Glu-tRNA(Gln). The chain is Glutamyl-tRNA(Gln) amidotransferase subunit C, mitochondrial from Anopheles darlingi (Mosquito).